Consider the following 232-residue polypeptide: ATP synthase subunit a (232 aa).

6 helical membrane passes run 18 to 38, 74 to 94, 107 to 127, 142 to 162, 173 to 193, and 195 to 215; these read LLFI…IAFI, WAGL…LGLF, TYSL…YLAF, ALIP…PIAL, GHLL…SLMV, and SIPI…VACI.

Belongs to the ATPase A chain family. F-type ATPases have 2 components, CF(1) - the catalytic core - and CF(0) - the membrane proton channel. CF(1) has five subunits: alpha(3), beta(3), gamma(1), delta(1), epsilon(1). CF(0) has three main subunits: a, b and c.

Its subcellular location is the mitochondrion inner membrane. Its function is as follows. Mitochondrial membrane ATP synthase (F(1)F(0) ATP synthase or Complex V) produces ATP from ADP in the presence of a proton gradient across the membrane which is generated by electron transport complexes of the respiratory chain. F-type ATPases consist of two structural domains, F(1) - containing the extramembraneous catalytic core and F(0) - containing the membrane proton channel, linked together by a central stalk and a peripheral stalk. During catalysis, ATP synthesis in the catalytic domain of F(1) is coupled via a rotary mechanism of the central stalk subunits to proton translocation. Key component of the proton channel; it may play a direct role in the translocation of protons across the membrane. The protein is ATP synthase subunit a (ATP6) of Paracentrotus lividus (Common sea urchin).